Consider the following 136-residue polypeptide: Large ribosomal subunit protein eL27 (136 aa).

A KOW domain is found at 5–40 (MKPGKVVMVLAGRYAGRKAVIVKNIDDGTADRPYSH).

Belongs to the eukaryotic ribosomal protein eL27 family. In terms of assembly, component of the large ribosomal subunit.

It localises to the cytoplasm. Its subcellular location is the cytosol. The protein localises to the rough endoplasmic reticulum. Its function is as follows. Component of the large ribosomal subunit. The sequence is that of Large ribosomal subunit protein eL27 (rpl27) from Hippocampus comes (Tiger tail seahorse).